A 40-amino-acid polypeptide reads, in one-letter code: Natriuretic peptide PtNP-a (40 aa).

C9 and C25 are disulfide-bonded. A compositionally biased stretch (polar residues) spans 17–34; that stretch reads ISNTSGMGCRNPIQNRPK. A disordered region spans residues 17–40; sequence ISNTSGMGCRNPIQNRPKSTPGGS.

This sequence belongs to the natriuretic peptide family. Expressed by the venom gland.

It is found in the secreted. Its function is as follows. Snake venom natriuretic peptide that targets NPR1 and possibly NPR2. Exhibits hypotensive and vasodepressor activities. Recombinant PtNP-a demonstrates a dose-dependent stimulation of cGMP production via the natriuretic peptide receptor 1 (NPR1) (EC(50)=563 nM) in Madine Darby Canine Kidney (MDCK) cells. It also inhibits the angiotensin converting enzyme (ACE). This is Natriuretic peptide PtNP-a from Pseudonaja textilis (Eastern brown snake).